A 557-amino-acid chain; its full sequence is Enhancer of polycomb-like protein 1 (557 aa).

Disordered stretches follow at residues 323 to 349 and 424 to 449; these read VKPA…RPQP and QSHN…TYST. The span at 327-337 shows a compositional bias: pro residues; sequence APVPTPAPPVK. Over residues 429–441 the composition is skewed to low complexity; sequence LSIPSSTPSTPLS.

This sequence belongs to the enhancer of polycomb family. In terms of assembly, component of the NuA4 histone acetyltransferase complex.

Its subcellular location is the nucleus. Component of the NuA4 histone acetyltransferase complex which is involved in transcriptional activation of selected genes principally by acetylation of nucleosomal histone H4 and H2A. The NuA4 complex is also involved in DNA repair. Involved in gene silencing by neighboring heterochromatin, blockage of the silencing spreading along the chromosome, and required for cell cycle progression through G2/M. This chain is Enhancer of polycomb-like protein 1 (epl1), found in Schizosaccharomyces pombe (strain 972 / ATCC 24843) (Fission yeast).